The sequence spans 534 residues: Protein tweety homolog 2 (534 aa).

Residues Met-1–Thr-44 lie on the Extracellular side of the membrane. The chain crosses the membrane as a helical span at residues Leu-45–Gly-65. Residues Tyr-66–Cys-87 are Cytoplasmic-facing. A helical transmembrane segment spans residues Cys-88 to Phe-108. Topologically, residues Tyr-109–Trp-213 are extracellular. 2 residues coordinate Ca(2+): Glu-113 and Asp-116. Residue Asn-129 is glycosylated (N-linked (GlcNAc...) asparagine). The RGD motif lies at Arg-164–Asp-166. Asn-197 and Asn-204 each carry an N-linked (GlcNAc...) asparagine glycan. A helical transmembrane segment spans residues Leu-214–Leu-234. Residues Ala-235–Cys-240 are Cytoplasmic-facing. The chain crosses the membrane as a helical span at residues Leu-241–Ala-261. At Leu-262–Gly-388 the chain is on the extracellular side. Cystine bridges form between Cys-274-Cys-382 and Cys-300-Cys-367. Asn-352 carries an N-linked (GlcNAc...) asparagine glycan. A helical transmembrane segment spans residues Leu-389–Ala-409. Residues Met-410–Ala-534 lie on the Cytoplasmic side of the membrane.

It belongs to the tweety family. As to quaternary structure, forms cis-homodimers in the presence of Ca(+2) and forms monomers and trans-dimers in the absence of Ca(2+).

The protein localises to the cell membrane. It catalyses the reaction chloride(in) = chloride(out). The enzyme catalyses L-glutamate(out) = L-glutamate(in). Its function is as follows. May act as a calcium-independent, swelling-dependent volume-regulated anion channel (VRAC-swell) which plays a pivotal role in the process of regulatory volume decrease (RVD) in the brain through the efflux of anions like chloride and organic osmolytes like glutamate. Probable large-conductance Ca(2+)-activated chloride channel. The sequence is that of Protein tweety homolog 2 (ttyh2) from Xenopus laevis (African clawed frog).